Reading from the N-terminus, the 306-residue chain is Porphobilinogen deaminase (306 aa).

Cys240 is subject to S-(dipyrrolylmethanemethyl)cysteine.

This sequence belongs to the HMBS family. Monomer. Dipyrromethane serves as cofactor.

The catalysed reaction is 4 porphobilinogen + H2O = hydroxymethylbilane + 4 NH4(+). It functions in the pathway porphyrin-containing compound metabolism; protoporphyrin-IX biosynthesis; coproporphyrinogen-III from 5-aminolevulinate: step 2/4. Tetrapolymerization of the monopyrrole PBG into the hydroxymethylbilane pre-uroporphyrinogen in several discrete steps. In Syntrophomonas wolfei subsp. wolfei (strain DSM 2245B / Goettingen), this protein is Porphobilinogen deaminase.